The primary structure comprises 295 residues: Ethanolamine ammonia-lyase small subunit (295 aa).

The adenosylcob(III)alamin site is built by Val207, Glu228, and Cys258.

Belongs to the EutC family. The basic unit is a heterodimer which dimerizes to form tetramers. The heterotetramers trimerize; 6 large subunits form a core ring with 6 small subunits projecting outwards. Adenosylcob(III)alamin serves as cofactor.

The protein resides in the bacterial microcompartment. It carries out the reaction ethanolamine = acetaldehyde + NH4(+). The protein operates within amine and polyamine degradation; ethanolamine degradation. Catalyzes the deamination of various vicinal amino-alcohols to oxo compounds. Allows this organism to utilize ethanolamine as the sole source of nitrogen and carbon in the presence of external vitamin B12. The chain is Ethanolamine ammonia-lyase small subunit from Escherichia coli (strain UTI89 / UPEC).